Consider the following 227-residue polypeptide: PKHD-type hydroxylase Bxeno_B2756 (227 aa).

The 100-residue stretch at 80-179 (QVYPPLFNRY…RVASFFWVQS (100 aa)) folds into the Fe2OG dioxygenase domain. Residues His98, Asp100, and His160 each contribute to the Fe cation site. Arg170 is a 2-oxoglutarate binding site.

Requires Fe(2+) as cofactor. It depends on L-ascorbate as a cofactor.

The chain is PKHD-type hydroxylase Bxeno_B2756 from Paraburkholderia xenovorans (strain LB400).